A 450-amino-acid polypeptide reads, in one-letter code: Tubulin alpha-4 chain (450 aa).

Glutamine 11 is a GTP binding site. N6-acetyllysine is present on lysine 40. Residues glutamate 71, glycine 144, threonine 145, threonine 179, asparagine 206, and asparagine 228 each coordinate GTP. Residue glutamate 71 coordinates Mg(2+). Residue glutamate 254 is part of the active site. Residues 431-450 (DYEEVGAESGEGDEGDEEEY) form a disordered region.

The protein belongs to the tubulin family. As to quaternary structure, dimer of alpha and beta chains. A typical microtubule is a hollow water-filled tube with an outer diameter of 25 nm and an inner diameter of 15 nM. Alpha-beta heterodimers associate head-to-tail to form protofilaments running lengthwise along the microtubule wall with the beta-tubulin subunit facing the microtubule plus end conferring a structural polarity. Microtubules usually have 13 protofilaments but different protofilament numbers can be found in some organisms and specialized cells. The cofactor is Mg(2+). In terms of processing, undergoes a tyrosination/detyrosination cycle, the cyclic removal and re-addition of a C-terminal tyrosine residue by the enzymes tubulin tyrosine carboxypeptidase (TTCP) and tubulin tyrosine ligase (TTL), respectively. Post-translationally, acetylation of alpha chains at Lys-40 stabilizes microtubules and affects affinity and processivity of microtubule motors. This modification has a role in multiple cellular functions, ranging from cell motility, cell cycle progression or cell differentiation to intracellular trafficking and signaling.

The protein localises to the cytoplasm. The protein resides in the cytoskeleton. It carries out the reaction GTP + H2O = GDP + phosphate + H(+). Tubulin is the major constituent of microtubules, a cylinder consisting of laterally associated linear protofilaments composed of alpha- and beta-tubulin heterodimers. Microtubules grow by the addition of GTP-tubulin dimers to the microtubule end, where a stabilizing cap forms. Below the cap, tubulin dimers are in GDP-bound state, owing to GTPase activity of alpha-tubulin. The sequence is that of Tubulin alpha-4 chain from Gossypium hirsutum (Upland cotton).